A 412-amino-acid polypeptide reads, in one-letter code: Nuclear hormone receptor family member nhr-61 (412 aa).

A compositionally biased stretch (low complexity) spans M1 to T19. The tract at residues M1–P23 is disordered. A DNA-binding region (nuclear receptor) is located at residues S27–G102. 2 consecutive NR C4-type zinc fingers follow at residues C30–C50 and C66–C90. The 264-residue stretch at K144–R407 folds into the NR LBD domain.

Belongs to the nuclear hormone receptor family.

It is found in the nucleus. Functionally, orphan nuclear receptor. The sequence is that of Nuclear hormone receptor family member nhr-61 (nhr-61) from Caenorhabditis elegans.